The following is a 228-amino-acid chain: Small ribosomal subunit protein uS2 (228 aa).

This sequence belongs to the universal ribosomal protein uS2 family.

This is Small ribosomal subunit protein uS2 from Buchnera aphidicola subsp. Baizongia pistaciae (strain Bp).